Consider the following 293-residue polypeptide: Nitrogenase iron protein (293 aa).

Residue 10 to 17 (GKGGIGKS) coordinates ATP. Residue Cys98 participates in [4Fe-4S] cluster binding. Residue Arg101 is modified to ADP-ribosylarginine; by dinitrogenase reductase ADP-ribosyltransferase. A [4Fe-4S] cluster-binding site is contributed by Cys133.

The protein belongs to the NifH/BchL/ChlL family. As to quaternary structure, homodimer. Requires [4Fe-4S] cluster as cofactor. In terms of processing, the reversible ADP-ribosylation of Arg-101 inactivates the nitrogenase reductase and regulates nitrogenase activity.

It catalyses the reaction N2 + 8 reduced [2Fe-2S]-[ferredoxin] + 16 ATP + 16 H2O = H2 + 8 oxidized [2Fe-2S]-[ferredoxin] + 2 NH4(+) + 16 ADP + 16 phosphate + 6 H(+). The key enzymatic reactions in nitrogen fixation are catalyzed by the nitrogenase complex, which has 2 components: the iron protein and the molybdenum-iron protein. This chain is Nitrogenase iron protein, found in Pectobacterium atrosepticum (strain SCRI 1043 / ATCC BAA-672) (Erwinia carotovora subsp. atroseptica).